The chain runs to 291 residues: Taste receptor type 2 member 16 (291 aa).

Position 1 (Met1) is a topological domain, extracellular. A helical transmembrane segment spans residues Ile2–Ile22. The Cytoplasmic segment spans residues Val23–Arg41. A helical transmembrane segment spans residues Leu42–Ala62. Residues Ser63–Thr84 are Extracellular-facing. An N-linked (GlcNAc...) asparagine glycan is attached at Asn80. A helical membrane pass occupies residues Trp85–Ile105. Topologically, residues Lys106 to Leu125 are cytoplasmic. A helical membrane pass occupies residues Phe126 to Ile146. Over Gly147 to Thr182 the chain is Extracellular. Asn163 carries N-linked (GlcNAc...) asparagine glycosylation. Residues Val183–Leu203 form a helical membrane-spanning segment. Topologically, residues Thr204–Ser228 are cytoplasmic. Residues Leu229–Gly249 traverse the membrane as a helical segment. Residues Thr250–Trp257 are Extracellular-facing. The chain crosses the membrane as a helical span at residues Leu258 to Leu278. Topologically, residues Ser279–Cys291 are cytoplasmic.

It belongs to the G-protein coupled receptor T2R family. In terms of assembly, interacts with RTP3 and RTP4.

The protein localises to the cell membrane. Its function is as follows. Receptor that may play a role in the perception of bitterness and is gustducin-linked. May play a role in sensing the chemical composition of the gastrointestinal content. The activity of this receptor may stimulate alpha gustducin, mediate PLC-beta-2 activation and lead to the gating of TRPM5. This chain is Taste receptor type 2 member 16 (TAS2R16), found in Pan troglodytes (Chimpanzee).